The following is a 1024-amino-acid chain: Nardilysin-like (1024 aa).

Residues Pro41–Gln103 form a disordered region. A compositionally biased stretch (acidic residues) spans Gln52–Glu95. A Zn(2+)-binding site is contributed by His129. Glu132 acts as the Proton acceptor in catalysis. His133 provides a ligand contact to Zn(2+). Glu203 is a catalytic residue. Position 210 (Glu210) interacts with Zn(2+).

This sequence belongs to the peptidase M16 family. Zn(2+) is required as a cofactor.

It catalyses the reaction Hydrolysis of polypeptides, preferably at -Xaa-|-Arg-Lys-, and less commonly at -Arg-|-Arg-Xaa-, in which Xaa is not Arg or Lys.. In terms of biological role, cleaves peptide substrates on the N-terminus of arginine residues in dibasic pairs. The polypeptide is Nardilysin-like (Arabidopsis thaliana (Mouse-ear cress)).